We begin with the raw amino-acid sequence, 394 residues long: Tryptophan synthase beta chain (394 aa).

An N6-(pyridoxal phosphate)lysine modification is found at Lys90.

The protein belongs to the TrpB family. As to quaternary structure, tetramer of two alpha and two beta chains. Pyridoxal 5'-phosphate serves as cofactor.

It carries out the reaction (1S,2R)-1-C-(indol-3-yl)glycerol 3-phosphate + L-serine = D-glyceraldehyde 3-phosphate + L-tryptophan + H2O. The protein operates within amino-acid biosynthesis; L-tryptophan biosynthesis; L-tryptophan from chorismate: step 5/5. Its function is as follows. The beta subunit is responsible for the synthesis of L-tryptophan from indole and L-serine. This Bacteroides thetaiotaomicron (strain ATCC 29148 / DSM 2079 / JCM 5827 / CCUG 10774 / NCTC 10582 / VPI-5482 / E50) protein is Tryptophan synthase beta chain.